The following is a 366-amino-acid chain: S-adenosylmethionine:tRNA ribosyltransferase-isomerase (366 aa).

This sequence belongs to the QueA family. As to quaternary structure, monomer.

It is found in the cytoplasm. The catalysed reaction is 7-aminomethyl-7-carbaguanosine(34) in tRNA + S-adenosyl-L-methionine = epoxyqueuosine(34) in tRNA + adenine + L-methionine + 2 H(+). Its pathway is tRNA modification; tRNA-queuosine biosynthesis. In terms of biological role, transfers and isomerizes the ribose moiety from AdoMet to the 7-aminomethyl group of 7-deazaguanine (preQ1-tRNA) to give epoxyqueuosine (oQ-tRNA). In Parasynechococcus marenigrum (strain WH8102), this protein is S-adenosylmethionine:tRNA ribosyltransferase-isomerase.